The following is a 365-amino-acid chain: DNA replication and repair protein RecF (365 aa).

30-37 contributes to the ATP binding site; the sequence is GANGQGKT.

Belongs to the RecF family.

The protein resides in the cytoplasm. Functionally, the RecF protein is involved in DNA metabolism; it is required for DNA replication and normal SOS inducibility. RecF binds preferentially to single-stranded, linear DNA. It also seems to bind ATP. In Geobacter metallireducens (strain ATCC 53774 / DSM 7210 / GS-15), this protein is DNA replication and repair protein RecF.